The sequence spans 152 residues: Protein NrdI (152 aa).

It belongs to the NrdI family.

Functionally, probably involved in ribonucleotide reductase function. This Mycolicibacterium vanbaalenii (strain DSM 7251 / JCM 13017 / BCRC 16820 / KCTC 9966 / NRRL B-24157 / PYR-1) (Mycobacterium vanbaalenii) protein is Protein NrdI.